The chain runs to 678 residues: Probable antibacterial peptide polyprotein (678 aa).

14 repeat units span residues 1–67 (MRSP…PEVR), 68–114 (ERRS…PEVR), 115–161 (ERRS…PEVR), 162–208 (ERRS…PEVR), 209–255 (ERRS…PEVR), 256–302 (ERGS…PEVR), 303–349 (ERRS…PEVR), 350–396 (ERRS…PEVR), 397–443 (ERRS…PEVR), 444–490 (ERRS…PEVR), 491–537 (ERRS…PEVR), 538–584 (ERRS…PEVR), 585–631 (ERRS…PEVR), and 632–678 (ERRS…PEVR). The segment at 1–678 (MRSPRVIHLA…SEGVVLPEVR (678 aa)) is 14 X approximate tandem repeats. The O-linked (GalNAc...) threonine glycan is linked to Thr-32. 2 disordered regions span residues 58-97 (SEAE…DASL) and 113-678 (VRER…PEVR). Residues 64 to 73 (PEVRERRSPV) are compositionally biased toward basic and acidic residues. O-linked (GalNAc...) threonine glycosylation is found at Thr-83 and Thr-130. Residues 145-157 (ESELSPLSEAEVL) show a composition bias toward low complexity. A compositionally biased stretch (basic and acidic residues) spans 158 to 167 (PEVRERRSPV). O-linked (GalNAc...) threonine glycosylation occurs at Thr-177. The span at 188–204 (VASLESELSPLSEAEVL) shows a compositional bias: low complexity. The span at 205 to 214 (PEVRERRSPV) shows a compositional bias: basic and acidic residues. O-linked (GalNAc...) threonine glycans are attached at residues Thr-224 and Thr-271. The segment covering 299–308 (PEVRERRSPV) has biased composition (basic and acidic residues). A glycan (O-linked (GalNAc...) threonine) is linked at Thr-318. Low complexity predominate over residues 333–345 (ESELSPLSEAEVL). The segment covering 346–355 (PEVRERRSPV) has biased composition (basic and acidic residues). Thr-365 carries an O-linked (GalNAc...) threonine glycan. Over residues 380–392 (ESELSPLSEAEVL) the composition is skewed to low complexity. Basic and acidic residues predominate over residues 393–402 (PEVRERRSPV). O-linked (GalNAc...) threonine glycosylation is present at Thr-412. The span at 427–439 (ESELSPLSEAEVL) shows a compositional bias: low complexity. The span at 440-449 (PEVRERRSPV) shows a compositional bias: basic and acidic residues. A glycan (O-linked (GalNAc...) threonine) is linked at Thr-459. Residues 474 to 486 (ESELSPLSEAEVL) show a composition bias toward low complexity. Basic and acidic residues predominate over residues 487–496 (PEVRERRSPV). Thr-506 is a glycosylation site (O-linked (GalNAc...) threonine). The segment covering 521-533 (ESELSPSSEAEVL) has biased composition (low complexity). The span at 534–543 (PEVRERRSPV) shows a compositional bias: basic and acidic residues. Thr-553 is a glycosylation site (O-linked (GalNAc...) threonine). Residues 568–580 (ESELSPLSEAEVL) are compositionally biased toward low complexity. Positions 581–590 (PEVRERRSPV) are enriched in basic and acidic residues. O-linked (GalNAc...) threonine glycosylation occurs at Thr-600. Over residues 615–627 (ESELSPLSEAEGL) the composition is skewed to low complexity. Residue Thr-647 is glycosylated (O-linked (GalNAc...) threonine).

It is found in the secreted. In terms of biological role, has antibacterial activity in vitro. In Riptortus clavatus (Bean bug), this protein is Probable antibacterial peptide polyprotein.